A 292-amino-acid chain; its full sequence is 4-hydroxy-tetrahydrodipicolinate synthase (292 aa).

Position 45 (Thr-45) interacts with pyruvate. Catalysis depends on Tyr-133, which acts as the Proton donor/acceptor. Catalysis depends on Lys-161, which acts as the Schiff-base intermediate with substrate. Pyruvate is bound at residue Ile-203.

It belongs to the DapA family. As to quaternary structure, homotetramer; dimer of dimers.

It localises to the cytoplasm. The enzyme catalyses L-aspartate 4-semialdehyde + pyruvate = (2S,4S)-4-hydroxy-2,3,4,5-tetrahydrodipicolinate + H2O + H(+). It functions in the pathway amino-acid biosynthesis; L-lysine biosynthesis via DAP pathway; (S)-tetrahydrodipicolinate from L-aspartate: step 3/4. Its function is as follows. Catalyzes the condensation of (S)-aspartate-beta-semialdehyde [(S)-ASA] and pyruvate to 4-hydroxy-tetrahydrodipicolinate (HTPA). The sequence is that of 4-hydroxy-tetrahydrodipicolinate synthase from Shigella flexneri.